A 96-amino-acid polypeptide reads, in one-letter code: DNA-binding protein Saci_1468 (96 aa).

This sequence belongs to the PDCD5 family.

This Sulfolobus acidocaldarius (strain ATCC 33909 / DSM 639 / JCM 8929 / NBRC 15157 / NCIMB 11770) protein is DNA-binding protein Saci_1468.